Reading from the N-terminus, the 461-residue chain is D-phenylhydantoinase (461 aa).

A divalent metal cation contacts are provided by His-59, His-61, and Lys-151. Lys-151 carries the N6-carboxylysine modification. Position 156 (Tyr-156) interacts with substrate. His-182 and His-239 together coordinate a divalent metal cation. A substrate-binding site is contributed by Ser-286. Residue Asp-313 coordinates a divalent metal cation. Asn-335 contacts substrate.

It belongs to the metallo-dependent hydrolases superfamily. Hydantoinase/dihydropyrimidinase family. In terms of assembly, homotetramer. It depends on a divalent metal cation as a cofactor. In terms of processing, carboxylation allows a single lysine to coordinate two divalent metal cations.

The enzyme catalyses D-5-phenylhydantoin + H2O = N-carbamoyl-D-phenylglycine + H(+). Catalyzes the stereospecific hydrolysis of the cyclic amide bond of D-hydantoin derivatives with an aromatic side chains at the 5'-position. Has no activity on dihydropyrimidines. The physiological function is unknown. The polypeptide is D-phenylhydantoinase (Shigella boydii serotype 4 (strain Sb227)).